Consider the following 116-residue polypeptide: Large ribosomal subunit protein bL19 (116 aa).

Belongs to the bacterial ribosomal protein bL19 family.

Its function is as follows. This protein is located at the 30S-50S ribosomal subunit interface and may play a role in the structure and function of the aminoacyl-tRNA binding site. The sequence is that of Large ribosomal subunit protein bL19 from Stutzerimonas stutzeri (strain A1501) (Pseudomonas stutzeri).